Reading from the N-terminus, the 277-residue chain is Exosome complex component Rrp42 (277 aa).

It belongs to the RNase PH family. Rrp42 subfamily. As to quaternary structure, component of the archaeal exosome complex. Forms a hexameric ring-like arrangement composed of 3 Rrp41-Rrp42 heterodimers. The hexameric ring associates with a trimer of Rrp4 and/or Csl4 subunits.

It is found in the cytoplasm. Its function is as follows. Non-catalytic component of the exosome, which is a complex involved in RNA degradation. Contributes to the structuring of the Rrp41 active site. The sequence is that of Exosome complex component Rrp42 from Pyrococcus furiosus (strain ATCC 43587 / DSM 3638 / JCM 8422 / Vc1).